A 201-amino-acid polypeptide reads, in one-letter code: Recombination protein RecR (201 aa).

The segment at 60 to 75 (CKYCQSLTEKDVCDIC) adopts a C4-type zinc-finger fold. The region spanning 83–177 (SKLCIIESML…KISRIGFGVP (95 aa)) is the Toprim domain.

The protein belongs to the RecR family.

Its function is as follows. May play a role in DNA repair. It seems to be involved in an RecBC-independent recombinational process of DNA repair. It may act with RecF and RecO. This Francisella philomiragia subsp. philomiragia (strain ATCC 25017 / CCUG 19701 / FSC 153 / O#319-036) protein is Recombination protein RecR.